A 31-amino-acid polypeptide reads, in one-letter code: MEALVYTFLLIGTLGIIFFAIFFREPPRIVR.

The helical transmembrane segment at 3–23 threads the bilayer; sequence ALVYTFLLIGTLGIIFFAIFF.

This sequence belongs to the PsbT family. PSII is composed of 1 copy each of membrane proteins PsbA, PsbB, PsbC, PsbD, PsbE, PsbF, PsbH, PsbI, PsbJ, PsbK, PsbL, PsbM, PsbT, PsbY, PsbZ, Psb30/Ycf12, at least 3 peripheral proteins of the oxygen-evolving complex and a large number of cofactors. It forms dimeric complexes.

It is found in the plastid. Its subcellular location is the chloroplast thylakoid membrane. Found at the monomer-monomer interface of the photosystem II (PS II) dimer, plays a role in assembly and dimerization of PSII. PSII is a light-driven water plastoquinone oxidoreductase, using light energy to abstract electrons from H(2)O, generating a proton gradient subsequently used for ATP formation. The sequence is that of Photosystem II reaction center protein T from Stigeoclonium helveticum (Green alga).